A 588-amino-acid polypeptide reads, in one-letter code: Aspartate--tRNA ligase (588 aa).

L-aspartate is bound at residue E177. An aspartate region spans residues 201–204 (QLFK). R223 provides a ligand contact to L-aspartate. Residues 223-225 (RDE) and Q232 each bind ATP. H451 provides a ligand contact to L-aspartate. ATP is bound at residue E485. R492 is an L-aspartate binding site. Position 537–540 (537–540 (GLDR)) interacts with ATP.

It belongs to the class-II aminoacyl-tRNA synthetase family. Type 1 subfamily. In terms of assembly, homodimer.

It is found in the cytoplasm. It carries out the reaction tRNA(Asp) + L-aspartate + ATP = L-aspartyl-tRNA(Asp) + AMP + diphosphate. Catalyzes the attachment of L-aspartate to tRNA(Asp) in a two-step reaction: L-aspartate is first activated by ATP to form Asp-AMP and then transferred to the acceptor end of tRNA(Asp). This chain is Aspartate--tRNA ligase, found in Staphylococcus aureus (strain Newman).